A 442-amino-acid chain; its full sequence is Yes-associated protein homolog 1 (442 aa).

Positions 1–10 (MASKSIHKKH) are enriched in basic residues. The tract at residues 1–84 (MASKSIHKKH…GSVDESSRTA (84 aa)) is disordered. Composition is skewed to polar residues over residues 13–22 (NSQQDKNQFS) and 55–71 (LPSS…SSAH). The residue at position 104 (serine 104) is a Phosphoserine. Over residues 108–120 (LHTSVNNGQSSAT) the composition is skewed to polar residues. Residues 108-136 (LHTSVNNGQSSATVPHPSHHNVHHQHSKS) form a disordered region. Residues 124-134 (PSHHNVHHQHS) are compositionally biased toward basic residues. One can recognise a WW domain in the interval 203-236 (LPMPQGWEMCYDSDGVRYFKDHNSKTTTWDDPRL).

This sequence belongs to the YAP1 family. Highly divergent. As to quaternary structure, interacts (via WW domain) with wts-1 (via N-terminus). Interacts (via WW domain) with egl-44; the interaction may regulate transcription. Expressed in epithelia, hypodermis, muscles, pharynx, intestine, gonadal sheath cells, vulva, spermatheca and in excretory tissue.

It is found in the cytoplasm. The protein resides in the nucleus. It localises to the cell projection. Its subcellular location is the cilium. The protein localises to the cytoskeleton. It is found in the cilium axoneme. Its function is as follows. Plays a role in thermal stress response and in aging. The sequence is that of Yes-associated protein homolog 1 from Caenorhabditis elegans.